The primary structure comprises 1390 residues: DNA-directed RNA polymerase subunit beta (1390 aa).

It belongs to the RNA polymerase beta chain family. The RNAP catalytic core consists of 2 alpha, 1 beta, 1 beta' and 1 omega subunit. When a sigma factor is associated with the core the holoenzyme is formed, which can initiate transcription.

The enzyme catalyses RNA(n) + a ribonucleoside 5'-triphosphate = RNA(n+1) + diphosphate. Functionally, DNA-dependent RNA polymerase catalyzes the transcription of DNA into RNA using the four ribonucleoside triphosphates as substrates. The sequence is that of DNA-directed RNA polymerase subunit beta from Chromobacterium violaceum (strain ATCC 12472 / DSM 30191 / JCM 1249 / CCUG 213 / NBRC 12614 / NCIMB 9131 / NCTC 9757 / MK).